We begin with the raw amino-acid sequence, 293 residues long: Pyridoxal 5'-phosphate synthase subunit PdxS (293 aa).

D23 contacts D-ribose 5-phosphate. Catalysis depends on K80, which acts as the Schiff-base intermediate with D-ribose 5-phosphate. G152 contributes to the D-ribose 5-phosphate binding site. Residue R164 coordinates D-glyceraldehyde 3-phosphate. D-ribose 5-phosphate contacts are provided by residues G213 and G234–S235.

This sequence belongs to the PdxS/SNZ family. In terms of assembly, in the presence of PdxT, forms a dodecamer of heterodimers.

It catalyses the reaction aldehydo-D-ribose 5-phosphate + D-glyceraldehyde 3-phosphate + L-glutamine = pyridoxal 5'-phosphate + L-glutamate + phosphate + 3 H2O + H(+). The protein operates within cofactor biosynthesis; pyridoxal 5'-phosphate biosynthesis. Its function is as follows. Catalyzes the formation of pyridoxal 5'-phosphate from ribose 5-phosphate (RBP), glyceraldehyde 3-phosphate (G3P) and ammonia. The ammonia is provided by the PdxT subunit. Can also use ribulose 5-phosphate and dihydroxyacetone phosphate as substrates, resulting from enzyme-catalyzed isomerization of RBP and G3P, respectively. In Chloroflexus aggregans (strain MD-66 / DSM 9485), this protein is Pyridoxal 5'-phosphate synthase subunit PdxS.